The chain runs to 620 residues: 1-deoxy-D-xylulose-5-phosphate synthase (620 aa).

Thiamine diphosphate contacts are provided by residues histidine 80 and 121–123 (GHS). Residue aspartate 152 coordinates Mg(2+). Residues 153 to 154 (GA), asparagine 181, tyrosine 288, and glutamate 370 each bind thiamine diphosphate. Asparagine 181 contributes to the Mg(2+) binding site.

It belongs to the transketolase family. DXPS subfamily. Homodimer. The cofactor is Mg(2+). Thiamine diphosphate is required as a cofactor.

The enzyme catalyses D-glyceraldehyde 3-phosphate + pyruvate + H(+) = 1-deoxy-D-xylulose 5-phosphate + CO2. It functions in the pathway metabolic intermediate biosynthesis; 1-deoxy-D-xylulose 5-phosphate biosynthesis; 1-deoxy-D-xylulose 5-phosphate from D-glyceraldehyde 3-phosphate and pyruvate: step 1/1. Its function is as follows. Catalyzes the acyloin condensation reaction between C atoms 2 and 3 of pyruvate and glyceraldehyde 3-phosphate to yield 1-deoxy-D-xylulose-5-phosphate (DXP). The chain is 1-deoxy-D-xylulose-5-phosphate synthase from Salmonella choleraesuis (strain SC-B67).